Here is a 252-residue protein sequence, read N- to C-terminus: 2-succinyl-6-hydroxy-2,4-cyclohexadiene-1-carboxylate synthase (252 aa).

Belongs to the AB hydrolase superfamily. MenH family. As to quaternary structure, monomer.

It catalyses the reaction 5-enolpyruvoyl-6-hydroxy-2-succinyl-cyclohex-3-ene-1-carboxylate = (1R,6R)-6-hydroxy-2-succinyl-cyclohexa-2,4-diene-1-carboxylate + pyruvate. It functions in the pathway quinol/quinone metabolism; 1,4-dihydroxy-2-naphthoate biosynthesis; 1,4-dihydroxy-2-naphthoate from chorismate: step 3/7. It participates in quinol/quinone metabolism; menaquinone biosynthesis. Catalyzes a proton abstraction reaction that results in 2,5-elimination of pyruvate from 2-succinyl-5-enolpyruvyl-6-hydroxy-3-cyclohexene-1-carboxylate (SEPHCHC) and the formation of 2-succinyl-6-hydroxy-2,4-cyclohexadiene-1-carboxylate (SHCHC). The chain is 2-succinyl-6-hydroxy-2,4-cyclohexadiene-1-carboxylate synthase from Escherichia coli (strain SE11).